Here is a 427-residue protein sequence, read N- to C-terminus: Serine protease HTRA2, mitochondrial (427 aa).

Residues 33–57 (HTASSSKGSGGDNSKDQENNGQNKS) form a disordered region. The chain crosses the membrane as a helical span at residues 67–87 (VFQFCVPFSLGALVSAVLIEG). The IAP-binding signature appears at 78 to 81 (ALVS). A serine protease region spans residues 144-307 (SNGSGFVIEQ…IPIDYVKVFL (164 aa)). Active-site charge relay system residues include His-162, Asp-194, and Ser-271. Residues 330–415 (MGITMLTLTP…DLEIVILRGV (86 aa)) form the PDZ domain.

This sequence belongs to the peptidase S1C family. As to quaternary structure, interacts with th/DIAP1 (via BIR 2 domain).

The protein localises to the mitochondrion intermembrane space. Its subcellular location is the mitochondrion membrane. The enzyme catalyses Cleavage of non-polar aliphatic amino-acids at the P1 position, with a preference for Val, Ile and Met. At the P2 and P3 positions, Arg is selected most strongly with a secondary preference for other hydrophilic residues.. Serine protease that shows proteolytic activity against a non-specific substrate beta-casein. Promotes or induces cell death either by direct binding to and inhibition of BIRC proteins (also called inhibitor of apoptosis proteins, IAPs), leading to an increase in caspase activity, or by a BIRC inhibition-independent, caspase-independent and serine protease activity-dependent mechanism. Can antagonize antiapoptotic activity of th/Diap1 by directly inducing the degradation of th/Diap1. In Drosophila persimilis (Fruit fly), this protein is Serine protease HTRA2, mitochondrial.